The chain runs to 283 residues: Elongation factor Ts (283 aa).

Residues 79 to 82 are involved in Mg(2+) ion dislocation from EF-Tu; it reads TDFV.

It belongs to the EF-Ts family.

It localises to the cytoplasm. Functionally, associates with the EF-Tu.GDP complex and induces the exchange of GDP to GTP. It remains bound to the aminoacyl-tRNA.EF-Tu.GTP complex up to the GTP hydrolysis stage on the ribosome. The chain is Elongation factor Ts from Shewanella sp. (strain ANA-3).